A 467-amino-acid polypeptide reads, in one-letter code: Zinc finger protein 410 (467 aa).

Disordered stretches follow at residues 84–111 (PDGEETRAQTVQKSPEFLSTPESPSLLQ) and 187–214 (NAKTSSNGENVHLGSGDGQPKDSGPLPQ). 5 C2H2-type zinc fingers span residues 219–243 (LKCTVEGCDRTFVWPAHFKYHLKTH), 249–273 (FICPAAGCGKSFYVLQRLKVHMRTH), 279–303 (FVCPESNCGKQFTTAGNLKNHLRIH), 309–333 (FLCEAQGCGRSFAEYSSLRKHLVVH), and 339–362 (HQCQVCGKTFSQSGSRNVHMRKHH). C221, C226, H239, H243, C251, C256, H269, H273, C281, C286, H299, H303, C311, C316, H329, H333, C341, C344, H357, and H361 together coordinate Zn(2+).

In terms of assembly, interacts with CDKN2A/p14ARF. Post-translationally, O-glycosylated. O-GlcNAcylation may occur in response to increasing glucose levels and affect transcription factor activity. Sumoylated. Sumoylation increases its half-life, possibly by blocking ubiquitin-mediated degradation.

Its subcellular location is the nucleus. The protein localises to the chromosome. Functionally, transcription factor that binds to the sequence motif 5'-CATCCCATAATA-3', and is specifically required to silence expression of fetal hemoglobin in adult erythroid cells. Prevents expression of fetal hemoglobin genes HBG1 and HBG2 through CHD4: acts as a direct transcriptional activator of CHD4, a central component of the NuRD complex that represses transcription of fetal hemoglobin genes HBG1 and HBG2 in erythroid cells. May also activate transcription of matrix-remodeling genes such as MMP1 during fibroblast senescence. May activate transcription of the gap junction gene GJC1, perhaps in response to increasing glucose. However, recent studies suggest that ZNF410 is dedicated to regulate expression of a single gene: CHD4. This is Zinc finger protein 410 from Bos taurus (Bovine).